The sequence spans 268 residues: Indole-3-glycerol phosphate synthase (268 aa).

It belongs to the TrpC family.

It catalyses the reaction 1-(2-carboxyphenylamino)-1-deoxy-D-ribulose 5-phosphate + H(+) = (1S,2R)-1-C-(indol-3-yl)glycerol 3-phosphate + CO2 + H2O. It participates in amino-acid biosynthesis; L-tryptophan biosynthesis; L-tryptophan from chorismate: step 4/5. This Magnetococcus marinus (strain ATCC BAA-1437 / JCM 17883 / MC-1) protein is Indole-3-glycerol phosphate synthase.